A 223-amino-acid chain; its full sequence is 7-cyano-7-deazaguanine synthase (223 aa).

15–25 (FSGGQDSTTCL) provides a ligand contact to ATP. The Zn(2+) site is built by Cys-191, Cys-200, Cys-203, and Cys-206.

Belongs to the QueC family. In terms of assembly, homodimer. Zn(2+) is required as a cofactor.

The catalysed reaction is 7-carboxy-7-deazaguanine + NH4(+) + ATP = 7-cyano-7-deazaguanine + ADP + phosphate + H2O + H(+). Its pathway is purine metabolism; 7-cyano-7-deazaguanine biosynthesis. Functionally, catalyzes the ATP-dependent conversion of 7-carboxy-7-deazaguanine (CDG) to 7-cyano-7-deazaguanine (preQ(0)). The protein is 7-cyano-7-deazaguanine synthase of Staphylococcus epidermidis (strain ATCC 35984 / DSM 28319 / BCRC 17069 / CCUG 31568 / BM 3577 / RP62A).